A 156-amino-acid polypeptide reads, in one-letter code: Transcription antitermination protein NusB (156 aa).

This sequence belongs to the NusB family.

In terms of biological role, involved in transcription antitermination. Required for transcription of ribosomal RNA (rRNA) genes. Binds specifically to the boxA antiterminator sequence of the ribosomal RNA (rrn) operons. This is Transcription antitermination protein NusB from Mycolicibacterium paratuberculosis (strain ATCC BAA-968 / K-10) (Mycobacterium paratuberculosis).